The following is a 180-amino-acid chain: GTP cyclohydrolase 1 (180 aa).

Zn(2+)-binding residues include Cys-71, His-74, and Cys-142.

This sequence belongs to the GTP cyclohydrolase I family. As to quaternary structure, toroid-shaped homodecamer, composed of two pentamers of five dimers.

The catalysed reaction is GTP + H2O = 7,8-dihydroneopterin 3'-triphosphate + formate + H(+). It functions in the pathway cofactor biosynthesis; 7,8-dihydroneopterin triphosphate biosynthesis; 7,8-dihydroneopterin triphosphate from GTP: step 1/1. This chain is GTP cyclohydrolase 1 (folE), found in Helicobacter pylori (strain ATCC 700392 / 26695) (Campylobacter pylori).